The following is an 85-amino-acid chain: uncharacterized protein (85 aa).

The first 35 residues, 1-35 (MIEDPSKKISLWQKWINVDPKKRILFSLGLFALSA), serve as a signal peptide directing secretion.

The protein resides in the secreted. This is an uncharacterized protein from Dictyostelium discoideum (Social amoeba).